The primary structure comprises 140 residues: uncharacterized protein (140 aa).

Helical transmembrane passes span 42 to 62 (AFLF…IFAS), 65 to 85 (ASFL…SALG), and 96 to 116 (RASD…MLCF).

The protein resides in the membrane. This is an uncharacterized protein from Saccharomyces cerevisiae (strain ATCC 204508 / S288c) (Baker's yeast).